We begin with the raw amino-acid sequence, 101 residues long: Small ribosomal subunit protein uS14 (101 aa).

The protein belongs to the universal ribosomal protein uS14 family. In terms of assembly, part of the 30S ribosomal subunit. Contacts proteins S3 and S10.

Binds 16S rRNA, required for the assembly of 30S particles and may also be responsible for determining the conformation of the 16S rRNA at the A site. This chain is Small ribosomal subunit protein uS14, found in Cereibacter sphaeroides (strain ATCC 17029 / ATH 2.4.9) (Rhodobacter sphaeroides).